We begin with the raw amino-acid sequence, 494 residues long: Cytochrome P450 2A11 (494 aa).

At K379 the chain carries N6-acetyllysine. Residue C439 coordinates heme.

The protein belongs to the cytochrome P450 family. The cofactor is heme. As to expression, expressed in liver and lung as well as in nasal tissues.

Its subcellular location is the endoplasmic reticulum membrane. It localises to the microsome membrane. It carries out the reaction an organic molecule + reduced [NADPH--hemoprotein reductase] + O2 = an alcohol + oxidized [NADPH--hemoprotein reductase] + H2O + H(+). In terms of biological role, catalyzes the oxygenation of a variety of substrates, including ethanol and procarcinogens such as N-nitrosodiethylamine and phenacetin. Has no or little activity as a coumarin 7-hydroxylase and in the formation of androstenedione from testosterone. In Oryctolagus cuniculus (Rabbit), this protein is Cytochrome P450 2A11 (CYP2A11).